We begin with the raw amino-acid sequence, 142 residues long: Natriuretic peptides A (142 aa).

The first 23 residues, 1-23 (MMLKTVIYTGVLFLICNKVLVRA), serve as a signal peptide directing secretion. Positions 24–112 (DPLYSPYSSK…RLRDLLMAPR (89 aa)) are excised as a propeptide. Residues 47-123 (DTLGQDEGND…NRGSSGCFGS (77 aa)) are disordered. Basic and acidic residues predominate over residues 77 to 94 (WDRERERQWPASDYKKPQ). Cys-120 and Cys-136 are oxidised to a cystine.

It belongs to the natriuretic peptide family. Cleaved upon secretion to produce the functional hormone. Expressed in heart atrium and to a lower extent in heart ventricle, but not in brain.

It localises to the secreted. Hormone playing a key role in cardiovascular homeostasis through regulation of natriuresis, diuresis, and vasodilation. Has a cGMP-stimulating activity. In Acipenser transmontanus (White sturgeon), this protein is Natriuretic peptides A (nppa).